The following is a 102-amino-acid chain: Large ribosomal subunit protein mL63 (102 aa).

Belongs to the mitochondrion-specific ribosomal protein mL63 family.

It localises to the mitochondrion. The chain is Large ribosomal subunit protein mL63 (Mrpl57) from Mus musculus (Mouse).